An 840-amino-acid chain; its full sequence is N-acetyltransferase ESCO1 (840 aa).

Basic and acidic residues predominate over residues 1–25; it reads MMSIQEKSKENSSKVTKKSDDKNSE. Residues 1–188 form a disordered region; it reads MMSIQEKSKE…VLEVKSDSKE (188 aa). Composition is skewed to polar residues over residues 46–58, 65–74, and 81–96; these read KSQA…SKIN, RMSTRSSKAA, and KSIN…YSQE. The span at 131–140 shows a compositional bias: basic and acidic residues; sequence VSRRSLRSRE. Residues 141 to 153 show a composition bias toward polar residues; sequence IQGQVQAVKQSLP. A compositionally biased stretch (low complexity) spans 161–170; it reads SSTQSKSNKT. Residues 178 to 188 are compositionally biased toward basic and acidic residues; the sequence is KVLEVKSDSKE. The residue at position 200 (serine 200) is a Phosphoserine. Disordered regions lie at residues 221–300 and 318–338; these read TQGS…KSKR and NVEV…KPTE. The span at 267–278 shows a compositional bias: polar residues; that stretch reads HTQVNTNTTLPK. Basic and acidic residues predominate over residues 319–338; that stretch reads VEVKKESSQMESVKEEKPTE. Residue lysine 332 forms a Glycyl lysine isopeptide (Lys-Gly) (interchain with G-Cter in SUMO2) linkage. Serine 412 carries the phosphoserine modification. Disordered regions lie at residues 486-505 and 542-582; these read ANEI…HSFD and TGEN…KCNS. Polar residues predominate over residues 551–565; it reads APQQHSILSNQTSKS. The segment at 617–641 adopts a CCHH-type zinc-finger fold; sequence VSCNVCGMLYTASNPEDETQHLLFH. Residues 772-774, 780-785, and 812-814 each bind acetyl-CoA; these read IWV, RKKIAS, and TPD.

Belongs to the acetyltransferase family. ECO subfamily. The subunit structure is controversial. Monomer. Homodimer. Post-translationally, phosphorylated during mitosis, when associated with chromosomes. As to expression, widely expressed. Expressed in heart, brain, liver, placenta, lung, kidney and pancreas. Highly expressed in muscle.

It localises to the nucleus. The protein resides in the chromosome. It catalyses the reaction L-lysyl-[protein] + acetyl-CoA = N(6)-acetyl-L-lysyl-[protein] + CoA + H(+). Acetyltransferase required for the establishment of sister chromatid cohesion. Couples the processes of cohesion and DNA replication to ensure that only sister chromatids become paired together. In contrast to the structural cohesins, the deposition and establishment factors are required only during S phase. Acts by mediating the acetylation of cohesin component SMC3. The chain is N-acetyltransferase ESCO1 (ESCO1) from Homo sapiens (Human).